We begin with the raw amino-acid sequence, 580 residues long: Myb-like protein C (580 aa).

4 disordered regions span residues 1–58, 73–101, 121–203, and 354–380; these read MTMI…YGSN, QYSI…TLLS, NVYN…SSTN, and SDND…NPPN. Composition is skewed to low complexity over residues 20 to 47, 87 to 101, and 126 to 203; these read NNNN…NNNN, NSTM…TLLS, and PHQS…SSTN. Over residues 361–371 the composition is skewed to basic residues; that stretch reads KKKRERIRKSV. 2 HTH myb-type domains span residues 368 to 430 and 431 to 482; these read RKSV…CPAI and RKGS…SREV. DNA-binding regions (H-T-H motif) lie at residues 402–426 and 454–478; these read WKKI…KRVL and WKNV…KSCM. Residues 484–546 enclose the Myb-like domain; sequence WSSREDEILQ…ECKTRYFQLN (63 aa).

Its subcellular location is the nucleus. Transcription activator required for the culmination, at the time of the fruiting body formation. Regulates genes involved in the cell differentiation within the fruiting body. The polypeptide is Myb-like protein C (mybC) (Dictyostelium discoideum (Social amoeba)).